The chain runs to 620 residues: 1-deoxy-D-xylulose-5-phosphate synthase (620 aa).

Residues histidine 80 and 121-123 (GHS) contribute to the thiamine diphosphate site. Residue aspartate 152 coordinates Mg(2+). Residues 153–154 (GA), asparagine 181, tyrosine 288, and glutamate 370 each bind thiamine diphosphate. Mg(2+) is bound at residue asparagine 181.

The protein belongs to the transketolase family. DXPS subfamily. In terms of assembly, homodimer. Requires Mg(2+) as cofactor. Thiamine diphosphate serves as cofactor.

It catalyses the reaction D-glyceraldehyde 3-phosphate + pyruvate + H(+) = 1-deoxy-D-xylulose 5-phosphate + CO2. Its pathway is metabolic intermediate biosynthesis; 1-deoxy-D-xylulose 5-phosphate biosynthesis; 1-deoxy-D-xylulose 5-phosphate from D-glyceraldehyde 3-phosphate and pyruvate: step 1/1. Catalyzes the acyloin condensation reaction between C atoms 2 and 3 of pyruvate and glyceraldehyde 3-phosphate to yield 1-deoxy-D-xylulose-5-phosphate (DXP). The protein is 1-deoxy-D-xylulose-5-phosphate synthase of Escherichia coli O157:H7.